A 126-amino-acid chain; its full sequence is Large ribosomal subunit protein bL12 (126 aa).

Belongs to the bacterial ribosomal protein bL12 family. In terms of assembly, homodimer. Part of the ribosomal stalk of the 50S ribosomal subunit. Forms a multimeric L10(L12)X complex, where L10 forms an elongated spine to which 2 to 4 L12 dimers bind in a sequential fashion. Binds GTP-bound translation factors.

Functionally, forms part of the ribosomal stalk which helps the ribosome interact with GTP-bound translation factors. Is thus essential for accurate translation. The chain is Large ribosomal subunit protein bL12 from Methylorubrum populi (strain ATCC BAA-705 / NCIMB 13946 / BJ001) (Methylobacterium populi).